We begin with the raw amino-acid sequence, 464 residues long: MLSATLRLLSLCPPESRFAVTLTRMQAWPSPPIRSLPGHGKPLRIFDTATSSVRELAPAVTARLYVCGITPYDATHLGHAFTYLTYDLAQRVLRDAGHHVHYVQNVTDVDDPLLERATRDGLDWRALADREIDLFREDMTALRMLAPDAYVGVVEAIPMIVDMVVELVDRGAAYQVDDDLYFSIATAPAFGEISHLSRAEMLAICAERGGDPRRTGKKDPLDPLLWRAHRPGEPSWPSPFGPGRPGWHIECSAIARHYLGGVIDIQGGGTDLSFPHHECSAAHAEVAAGIRPFARSYVHTAMVSLDGHKMSKSRGNLEFVSRLRRAGVDPAALRLALLDHRHTEDWEWTPGLLDDAVDRMNRWRAAVALPTGPDAMGLLAAVRERLADDLDAPGAVAAVDAWVGAALADAGGSAGAGPDPTHQGGPVRGSGGDVPAWGEAPALVRRLVDTLLGVDLEPVRPRGS.

Position 67 (Cys-67) interacts with Zn(2+). L-cysteinyl-5'-AMP-binding positions include 67–70, Thr-82, and 105–107; these read CGIT and NVT. The short motif at 69 to 79 is the 'HIGH' region element; sequence ITPYDATHLGH. Residues 207 to 212 carry the 'ERGGDP' region motif; sequence ERGGDP. Trp-247 is a binding site for L-cysteinyl-5'-AMP. Cys-251 is a Zn(2+) binding site. 269-271 contacts L-cysteinyl-5'-AMP; that stretch reads GTD. Zn(2+) is bound at residue His-276. L-cysteinyl-5'-AMP is bound at residue Val-303. Positions 309 to 313 match the 'KMSKS' region motif; that stretch reads KMSKS. Residues 410-435 form a disordered region; it reads AGGSAGAGPDPTHQGGPVRGSGGDVP.

This sequence belongs to the class-I aminoacyl-tRNA synthetase family. MshC subfamily. As to quaternary structure, monomer. It depends on Zn(2+) as a cofactor.

The catalysed reaction is 1D-myo-inositol 2-amino-2-deoxy-alpha-D-glucopyranoside + L-cysteine + ATP = 1D-myo-inositol 2-(L-cysteinylamino)-2-deoxy-alpha-D-glucopyranoside + AMP + diphosphate + H(+). Catalyzes the ATP-dependent condensation of GlcN-Ins and L-cysteine to form L-Cys-GlcN-Ins. This Frankia casuarinae (strain DSM 45818 / CECT 9043 / HFP020203 / CcI3) protein is L-cysteine:1D-myo-inositol 2-amino-2-deoxy-alpha-D-glucopyranoside ligase.